Here is a 216-residue protein sequence, read N- to C-terminus: Outer-membrane lipoprotein LolB (216 aa).

An N-terminal signal peptide occupies residues 1-24 (MNNLNYFTKISASCAALALMTLAG). Cys-25 is lipidated: N-palmitoyl cysteine. Residue Cys-25 is the site of S-diacylglycerol cysteine attachment.

The protein belongs to the LolB family. As to quaternary structure, monomer.

Its subcellular location is the cell outer membrane. Plays a critical role in the incorporation of lipoproteins in the outer membrane after they are released by the LolA protein. The protein is Outer-membrane lipoprotein LolB of Shewanella loihica (strain ATCC BAA-1088 / PV-4).